We begin with the raw amino-acid sequence, 412 residues long: Multifunctional CCA protein (412 aa).

ATP-binding residues include G8 and R11. Positions 8 and 11 each coordinate CTP. The Mg(2+) site is built by D21 and D23. Residues R91, R137, and R140 each coordinate ATP. The CTP site is built by R91, R137, and R140. One can recognise an HD domain in the interval 228–329 (TGIHTLMTLS…VKLFDSIDAW (102 aa)).

This sequence belongs to the tRNA nucleotidyltransferase/poly(A) polymerase family. Bacterial CCA-adding enzyme type 1 subfamily. As to quaternary structure, monomer. Can also form homodimers and oligomers. Mg(2+) serves as cofactor. Ni(2+) is required as a cofactor.

It carries out the reaction a tRNA precursor + 2 CTP + ATP = a tRNA with a 3' CCA end + 3 diphosphate. The enzyme catalyses a tRNA with a 3' CCA end + 2 CTP + ATP = a tRNA with a 3' CCACCA end + 3 diphosphate. Catalyzes the addition and repair of the essential 3'-terminal CCA sequence in tRNAs without using a nucleic acid template. Adds these three nucleotides in the order of C, C, and A to the tRNA nucleotide-73, using CTP and ATP as substrates and producing inorganic pyrophosphate. tRNA 3'-terminal CCA addition is required both for tRNA processing and repair. Also involved in tRNA surveillance by mediating tandem CCA addition to generate a CCACCA at the 3' terminus of unstable tRNAs. While stable tRNAs receive only 3'-terminal CCA, unstable tRNAs are marked with CCACCA and rapidly degraded. This chain is Multifunctional CCA protein, found in Escherichia coli O8 (strain IAI1).